A 143-amino-acid polypeptide reads, in one-letter code: Transcriptional regulator MraZ (143 aa).

SpoVT-AbrB domains lie at 5–47 (EYHH…PIEE) and 76–119 (AMES…SAER).

It belongs to the MraZ family. As to quaternary structure, forms oligomers.

It localises to the cytoplasm. The protein localises to the nucleoid. The sequence is that of Transcriptional regulator MraZ from Lactobacillus johnsonii (strain CNCM I-12250 / La1 / NCC 533).